The chain runs to 698 residues: Auxin response factor 22 (698 aa).

Positions 128 to 230 (FAKTLTQSDA…ELCVGIRRAK (103 aa)) form a DNA-binding region, TF-B3. Over residues 549-577 (TSSGSTETLSPGVTGNSSPNGNAHKTGNA) the composition is skewed to polar residues. The disordered stretch occupies residues 549–579 (TSSGSTETLSPGVTGNSSPNGNAHKTGNASD). Residues 603–683 (AGHCKVFMES…RRLTIIAGDR (81 aa)) enclose the PB1 domain.

The protein belongs to the ARF family. In terms of assembly, homodimers and heterodimers. As to expression, expressed in roots, culms, leaves and young panicles.

The protein resides in the nucleus. In terms of biological role, auxin response factors (ARFs) are transcriptional factors that bind specifically to the DNA sequence 5'-TGTCTC-3' found in the auxin-responsive promoter elements (AuxREs). This chain is Auxin response factor 22 (ARF22), found in Oryza sativa subsp. japonica (Rice).